Reading from the N-terminus, the 445-residue chain is Phenylacetate-coenzyme A ligase (445 aa).

This sequence belongs to the phenylacetyl-CoA ligase family. As to quaternary structure, monomer.

The catalysed reaction is 2-phenylacetate + ATP + CoA = phenylacetyl-CoA + AMP + diphosphate. The protein operates within aromatic compound metabolism; phenylacetate degradation. Its function is as follows. Catalyzes the activation of phenylacetic acid (PA) to phenylacetyl-CoA (PA-CoA). Involved in the phenylalanine metabolism. This is Phenylacetate-coenzyme A ligase from Thermus thermophilus (strain ATCC BAA-163 / DSM 7039 / HB27).